The following is a 260-amino-acid chain: Thiazole synthase (260 aa).

Lysine 96 (schiff-base intermediate with DXP) is an active-site residue. 1-deoxy-D-xylulose 5-phosphate is bound by residues glycine 157, 184–185 (AG), and 206–207 (NT).

This sequence belongs to the ThiG family. As to quaternary structure, homotetramer. Forms heterodimers with either ThiH or ThiS.

The protein localises to the cytoplasm. The enzyme catalyses [ThiS sulfur-carrier protein]-C-terminal-Gly-aminoethanethioate + 2-iminoacetate + 1-deoxy-D-xylulose 5-phosphate = [ThiS sulfur-carrier protein]-C-terminal Gly-Gly + 2-[(2R,5Z)-2-carboxy-4-methylthiazol-5(2H)-ylidene]ethyl phosphate + 2 H2O + H(+). The protein operates within cofactor biosynthesis; thiamine diphosphate biosynthesis. Catalyzes the rearrangement of 1-deoxy-D-xylulose 5-phosphate (DXP) to produce the thiazole phosphate moiety of thiamine. Sulfur is provided by the thiocarboxylate moiety of the carrier protein ThiS. In vitro, sulfur can be provided by H(2)S. This is Thiazole synthase from Bradyrhizobium diazoefficiens (strain JCM 10833 / BCRC 13528 / IAM 13628 / NBRC 14792 / USDA 110).